The following is a 394-amino-acid chain: Elongation factor Tu 2 (394 aa).

The 195-residue stretch at 10-204 (KPHVNVGTIG…ALDSYIPEPE (195 aa)) folds into the tr-type G domain. Residues 19–26 (GHVDHGKT) form a G1 region. 19-26 (GHVDHGKT) contributes to the GTP binding site. Threonine 26 serves as a coordination point for Mg(2+). The tract at residues 60–64 (GITIS) is G2. Residues 81–84 (DCPG) are G3. GTP-binding positions include 81–85 (DCPGH) and 136–139 (NKCD). The interval 136 to 139 (NKCD) is G4. The tract at residues 174–176 (SAL) is G5.

The protein belongs to the TRAFAC class translation factor GTPase superfamily. Classic translation factor GTPase family. EF-Tu/EF-1A subfamily. Monomer.

It is found in the cytoplasm. It carries out the reaction GTP + H2O = GDP + phosphate + H(+). Its function is as follows. GTP hydrolase that promotes the GTP-dependent binding of aminoacyl-tRNA to the A-site of ribosomes during protein biosynthesis. In Pseudoalteromonas translucida (strain TAC 125), this protein is Elongation factor Tu 2.